Here is a 69-residue protein sequence, read N- to C-terminus: Sec-independent protein translocase protein TatA (69 aa).

Residues 1–21 (MFPKLGMGELVVILLIVVILF) form a helical membrane-spanning segment. The tract at residues 43–69 (SFSGEDEEKPSTPGATSSDEASKAKQA) is disordered.

The protein belongs to the TatA/E family. In terms of assembly, the Tat system comprises two distinct complexes: a TatABC complex, containing multiple copies of TatA, TatB and TatC subunits, and a separate TatA complex, containing only TatA subunits. Substrates initially bind to the TatABC complex, which probably triggers association of the separate TatA complex to form the active translocon.

It is found in the cell inner membrane. Part of the twin-arginine translocation (Tat) system that transports large folded proteins containing a characteristic twin-arginine motif in their signal peptide across membranes. TatA could form the protein-conducting channel of the Tat system. This is Sec-independent protein translocase protein TatA from Anaeromyxobacter sp. (strain Fw109-5).